The following is a 593-amino-acid chain: NADH-quinone oxidoreductase subunit C/D (593 aa).

The interval 1 to 184 (MTADSALYIP…DPYSLSAAKQ (184 aa)) is NADH dehydrogenase I subunit C. Positions 208-593 (DYMFLNLGPN…IDFVMADVDR (386 aa)) are NADH dehydrogenase I subunit D.

This sequence in the N-terminal section; belongs to the complex I 30 kDa subunit family. In the C-terminal section; belongs to the complex I 49 kDa subunit family. NDH-1 is composed of 13 different subunits. Subunits NuoB, CD, E, F, and G constitute the peripheral sector of the complex.

It is found in the cell inner membrane. It carries out the reaction a quinone + NADH + 5 H(+)(in) = a quinol + NAD(+) + 4 H(+)(out). NDH-1 shuttles electrons from NADH, via FMN and iron-sulfur (Fe-S) centers, to quinones in the respiratory chain. The immediate electron acceptor for the enzyme in this species is believed to be ubiquinone. Couples the redox reaction to proton translocation (for every two electrons transferred, four hydrogen ions are translocated across the cytoplasmic membrane), and thus conserves the redox energy in a proton gradient. The polypeptide is NADH-quinone oxidoreductase subunit C/D (Pseudomonas aeruginosa (strain UCBPP-PA14)).